Reading from the N-terminus, the 488-residue chain is Regulatory protein E2 (488 aa).

Positions 1–201 (MEALNARFNV…ETVFAPVTSS (201 aa)) are transactivation domain. A compositionally biased stretch (polar residues) spans 196–215 (APVTSSTPPSTGLRESSNAS). The interval 196-384 (APVTSSTPPS…ISPDKVGSRV (189 aa)) is disordered. Positions 224 to 245 (TPTSTTATTTTFSTTTATATAT) are enriched in low complexity. Basic residues-rich tracts occupy residues 278-291 (VSRRRSRSRTRTRR) and 301-311 (KASRSRSRSRS). The segment covering 312–328 (TSRGSRGSGGSVTTSRD) has biased composition (low complexity). A compositionally biased stretch (basic residues) spans 332–346 (KRTRRGRGRGGRSRR). The tract at residues 404 to 488 (DPPVILLRGD…EWSFGNFDKL (85 aa)) is DNA-binding domain.

The protein belongs to the papillomaviridae E2 protein family. In terms of assembly, binds DNA as homodimer. Interacts with protein E1; this interaction greatly increases E1 DNA-binding activity. Interacts with protein L1; this interaction enhances E2-dependent replication and transcription activation. Interacts with protein L2; this interaction inhibits E2 transcriptional activity but not DNA replication function E2. Interacts with protein E7; this interaction inhibits E7 oncogenic activity. Interacts with host TAF1; this interaction modulates E2-dependent transcriptional regulation. Interacts with host BRD4; this interaction mediates E2 transcriptional activation function. Additionally, the interaction with host BRD4 on mitotic chromosomes mediates tethering of the viral genome. Interacts with host TOPBP1; this interaction is required for optimal viral DNA replication. Post-translationally, phosphorylated.

The protein localises to the host nucleus. Functionally, plays a role in the initiation of viral DNA replication. A dimer of E2 interacts with a dimer of E1 in order to improve specificity of E1 DNA binding activity. Once the complex recognizes and binds DNA at specific sites, the E2 dimer is removed from DNA. E2 also regulates viral transcription through binding to the E2RE response element (5'-ACCNNNNNNGGT-3') present in multiple copies in the regulatory regions of the viral genome. Activates or represses transcription depending on E2RE's position with regards to proximal promoter elements including the TATA-box. Repression occurs by sterically hindering the assembly of the transcription initiation complex. The sequence is that of Regulatory protein E2 from Homo sapiens (Human).